The following is a 500-amino-acid chain: Cytochrome P450 71D7 (500 aa).

C441 serves as a coordination point for heme.

The protein belongs to the cytochrome P450 family. The cofactor is heme.

This Solanum chacoense (Chaco potato) protein is Cytochrome P450 71D7 (CYP71D7).